The primary structure comprises 64 residues: Weak toxin CM-9a (64 aa).

5 cysteine pairs are disulfide-bonded: cysteine 3–cysteine 24, cysteine 6–cysteine 11, cysteine 17–cysteine 41, cysteine 45–cysteine 56, and cysteine 57–cysteine 62.

Belongs to the three-finger toxin family. Ancestral subfamily. Orphan group II sub-subfamily. Expressed by the venom gland.

Its subcellular location is the secreted. Its function is as follows. Binds with low affinity to muscular (alpha-1-beta-1-delta-epsilon/CHRNA1-CHRNB1-CHRND-CHRNE) and very low affinity to neuronal (alpha-7/CHRNA7) nicotinic acetylcholine receptor (nAChR). This is Weak toxin CM-9a from Naja kaouthia (Monocled cobra).